The chain runs to 145 residues: Hemoglobin subunit beta-1 (145 aa).

A Globin domain is found at 1-145 (TFTNDESQHI…VEAALATGYH (145 aa)). Positions 62 and 91 each coordinate heme b.

This sequence belongs to the globin family. As to quaternary structure, major hemoglobin is a tetramer of two alpha-1 chains and two beta-1 chains. Red blood cells.

Its function is as follows. Involved in oxygen transport from the lung to the various peripheral tissues. The protein is Hemoglobin subunit beta-1 (HBB1) of Triturus cristatus (Great crested newt).